Here is a 722-residue protein sequence, read N- to C-terminus: Glycine--tRNA ligase beta subunit (722 aa).

Belongs to the class-II aminoacyl-tRNA synthetase family. As to quaternary structure, tetramer of two alpha and two beta subunits.

It is found in the cytoplasm. The enzyme catalyses tRNA(Gly) + glycine + ATP = glycyl-tRNA(Gly) + AMP + diphosphate. The sequence is that of Glycine--tRNA ligase beta subunit (glyS) from Synechocystis sp. (strain ATCC 27184 / PCC 6803 / Kazusa).